Reading from the N-terminus, the 311-residue chain is Glycine-betaine-binding protein (311 aa).

A signal peptide spans 1–23 (MNRLIRSLCLACAGLFAAGLAQA).

Belongs to the OsmX family.

The protein localises to the periplasm. Binds glycine-betaine. The sequence is that of Glycine-betaine-binding protein from Pseudomonas aeruginosa (strain ATCC 15692 / DSM 22644 / CIP 104116 / JCM 14847 / LMG 12228 / 1C / PRS 101 / PAO1).